Reading from the N-terminus, the 132-residue chain is MVLVVKVDLSNIVLYIVAGCVVVSMLYSPFFSNDVKASSYAGAVFKGSGCIMDRNSFAQFGSCDIPKHVAESITKVATKEHDADIMVKRGEVTVRVVTLTETLFIILSRLFGLAVFLFMICLMSIVWFWCHR.

Over 1–11 the chain is Cytoplasmic; sequence MVLVVKVDLSN. Residues 12 to 32 form a helical membrane-spanning segment; sequence IVLYIVAGCVVVSMLYSPFFS. Residues 33–109 lie on the Lumenal side of the membrane; that stretch reads NDVKASSYAG…TETLFIILSR (77 aa). The helical transmembrane segment at 110-130 threads the bilayer; it reads LFGLAVFLFMICLMSIVWFWC. The Cytoplasmic segment spans residues 131–132; it reads HR.

It belongs to the benyvirus TGB3 movement protein family. Interacts with movement proteins TGB1 and TGB2.

Its subcellular location is the host cell junction. It localises to the host plasmodesma. It is found in the host endoplasmic reticulum membrane. Functionally, participates in the transport of viral RNA to the plasmodesmata. TGBp3 most probably contains signals of plasmodesmata targeting is therefore involved in the targeting of TGBp2, and viral RNAs-TGBp1 (RNP complex), to plasmodesmata. Can gate plasmodesmata and increase their size exclusion limit. This is Movement protein TGB3 from Beta macrocarpa (Beet).